The primary structure comprises 249 residues: 2-dehydro-3-deoxy-L-rhamnonate dehydrogenase (NAD(+)) (249 aa).

Y156 serves as the catalytic Proton acceptor.

The protein belongs to the short-chain dehydrogenases/reductases (SDR) family. As to quaternary structure, homotetramer.

The catalysed reaction is 2-dehydro-3-deoxy-L-rhamnonate + NAD(+) = 2,4-didehydro-3-deoxy-L-rhamnonate + NADH + H(+). It participates in carbohydrate degradation; L-rhamnose degradation. Its function is as follows. Catalyzes the NAD(+)-dependent dehydrogenation of 2-dehydro-3-deoxy-L-rhamnonate to form 2,4-didehydro-3-deoxy-L-rhamnonate. Does not show any detectable activity in the presence of NADP(+). Catalyzes the fourth step in an alternative pathway for rhamnose utilization that does not involve phosphorylated intermediates. In Sphingomonas sp. (strain SKA58), this protein is 2-dehydro-3-deoxy-L-rhamnonate dehydrogenase (NAD(+)).